We begin with the raw amino-acid sequence, 708 residues long: Lactotransferrin (708 aa).

A signal peptide spans 1-19; that stretch reads MKLFVPALLSLGALGLCLA. 2 consecutive Transferrin-like domains span residues 25-352 and 364-693; these read VRWC…NLRE and VVWC…NLKK. Cystine bridges form between C28-C64 and C38-C55. D79 serves as a coordination point for Fe cation. K92 is a catalytic residue. Y111 contacts Fe cation. 5 disulfide bridges follow: C134–C217, C176–C192, C179–C202, C189–C200, and C250–C264. 4 residues coordinate hydrogencarbonate: T136, R140, A142, and G143. Y211 serves as a coordination point for Fe cation. N-linked (GlcNAc...) (high mannose) asparagine glycosylation occurs at N252. Position 272 (H272) interacts with Fe cation. S278 (nucleophile) is an active-site residue. N-linked (GlcNAc...) (hybrid) asparagine glycosylation occurs at N300. 2 disulfides stabilise this stretch: C367–C399 and C377–C390. Residues D414 and Y452 each coordinate Fe cation. Cystine bridges form between C424/C703, C444/C666, C476/C551, C500/C694, C510/C524, C521/C534, C592/C606, and C644/C649. Hydrogencarbonate is bound by residues T478, R482, A484, and G485. N495 carries N-linked (GlcNAc...) (complex) asparagine; alternate glycosylation. N495 carries N-linked (GlcNAc...) (high mannose) asparagine; alternate glycosylation. An N-linked (GlcNAc...) (hybrid) asparagine; alternate glycan is attached at N495. Y545 is a binding site for Fe cation. N564 carries an N-linked (GlcNAc...) (high mannose) asparagine glycan. Residue H614 participates in Fe cation binding.

The protein belongs to the transferrin family. As to quaternary structure, monomer. Found in a complex with LTF, CLU, EPPIN and SEMG1. Found in a complex with MPO and LTF; interacts directly with CP, allows Fe(3+) incorporation into LTF and activation of CP ferroxidase activity. Poly-N-acetyllactosaminic carbohydrate moiety seems to be needed for TLR4 activation.

It is found in the secreted. The protein resides in the cytoplasmic granule. Functionally, transferrins are iron binding transport proteins which can bind two Fe(3+) ions in association with the binding of an anion, usually bicarbonate. In terms of biological role, major iron-binding and multifunctional protein found in exocrine fluids such as breast milk and mucosal secretions. Has antimicrobial activity, which depends on the extracellular cation concentration. Antimicrobial properties include bacteriostasis, which is related to its ability to sequester free iron and thus inhibit microbial growth, as well as direct bactericidal properties leading to the release of lipopolysaccharides from the bacterial outer membrane. Can also prevent bacterial biofilm development in P.aeruginosa infection. Has weak antifungal activity against C.albicans. Has anabolic, differentiating and anti-apoptotic effects on osteoblasts and can also inhibit osteoclastogenesis, possibly playing a role in the regulation of bone growth. Promotes binding of species C adenoviruses to epithelial cells, promoting adenovirus infection. Can inhibit papillomavirus infections. Stimulates the TLR4 signaling pathway leading to NF-kappa-B activation and subsequent pro-inflammatory cytokine production while also interfering with the lipopolysaccharide (LPS)-stimulated TLR4 signaling. Inhibits neutrophil granulocyte migration to sites of apoptosis, when secreted by apoptotic cells. Stimulates VEGFA-mediated endothelial cell migration and proliferation. Binds heparin, chondroitin sulfate and possibly other glycosaminoglycans (GAGs). Also binds specifically to pneumococcal surface protein A (PspA), the lipid A portion of bacterial lipopolysaccharide (LPS), lysozyme and DNA. Lactoferricin binds to the bacterial surface and is crucial for the bactericidal functions. Has some antiviral activity against papillomavirus infection. N-terminal region shows strong antifungal activity against C.albicans. Contains two BBXB heparin-binding consensus sequences that appear to form the predominate functional GAG-binding site. Its function is as follows. The lactotransferrin transferrin-like domain 1 functions as a serine protease of the peptidase S60 family that cuts arginine rich regions. This function contributes to the antimicrobial activity. Shows a preferential cleavage at -Arg-Ser-Arg-Arg-|- and -Arg-Arg-Ser-Arg-|-, and of Z-Phe-Arg-|-aminomethylcoumarin sites. The sequence is that of Lactotransferrin (LTF) from Bubalus bubalis (Domestic water buffalo).